Here is a 115-residue protein sequence, read N- to C-terminus: MAETLLKSTTRHIRLFTARVENGDLVPDPEQLTLDLDPDNEFLWTEGTVTTIQTRFRDLVESYAGQPLNDYNLRRIGTELEGSIRELLQAGSLTYNPDCRVMNYSMGLPRTPELL.

Belongs to the complex I NdhM subunit family. NDH-1 can be composed of about 15 different subunits; different subcomplexes with different compositions have been identified which probably have different functions.

Its subcellular location is the cellular thylakoid membrane. The catalysed reaction is a plastoquinone + NADH + (n+1) H(+)(in) = a plastoquinol + NAD(+) + n H(+)(out). It carries out the reaction a plastoquinone + NADPH + (n+1) H(+)(in) = a plastoquinol + NADP(+) + n H(+)(out). Its function is as follows. NDH-1 shuttles electrons from an unknown electron donor, via FMN and iron-sulfur (Fe-S) centers, to quinones in the respiratory and/or the photosynthetic chain. The immediate electron acceptor for the enzyme in this species is believed to be plastoquinone. Couples the redox reaction to proton translocation, and thus conserves the redox energy in a proton gradient. Cyanobacterial NDH-1 also plays a role in inorganic carbon-concentration. The protein is NAD(P)H-quinone oxidoreductase subunit M of Synechococcus sp. (strain WH7803).